The following is a 437-amino-acid chain: Trigger factor (437 aa).

Positions 161 to 246 constitute a PPIase FKBP-type domain; the sequence is DDQVNIDFVG…VNSVSAPVLP (86 aa).

The protein belongs to the FKBP-type PPIase family. Tig subfamily.

The protein localises to the cytoplasm. It catalyses the reaction [protein]-peptidylproline (omega=180) = [protein]-peptidylproline (omega=0). In terms of biological role, involved in protein export. Acts as a chaperone by maintaining the newly synthesized protein in an open conformation. Functions as a peptidyl-prolyl cis-trans isomerase. This is Trigger factor from Pseudomonas putida (strain GB-1).